The sequence spans 345 residues: uncharacterized protein (345 aa).

The CNNM transmembrane domain occupies 1–198; it reads MDVLSAVLLA…LSEGLLDHEE (198 aa). Transmembrane regions (helical) follow at residues 3 to 23 and 95 to 115; these read VLSA…FVGA and VPPA…HVLL. CBS domains are found at residues 217–280 and 285–342; these read AVPL…PQTV and VVRP…MRDG. Residues 312–332 traverse the membrane as a helical segment; sequence LALVTADNGSVVGMVALEDVV.

It belongs to the TerC family.

It localises to the cell membrane. This is an uncharacterized protein from Mycobacterium tuberculosis (strain ATCC 25618 / H37Rv).